Consider the following 334-residue polypeptide: Glyceraldehyde-3-phosphate dehydrogenase (334 aa).

Residues 12 to 13 (RI), Asp-34, and Arg-79 contribute to the NAD(+) site. D-glyceraldehyde 3-phosphate is bound by residues 150-152 (SCT), Thr-181, 210-211 (TG), and Arg-233. Cys-151 functions as the Nucleophile in the catalytic mechanism. Asn-315 is a binding site for NAD(+).

It belongs to the glyceraldehyde-3-phosphate dehydrogenase family. Homotetramer.

It localises to the cytoplasm. The enzyme catalyses D-glyceraldehyde 3-phosphate + phosphate + NAD(+) = (2R)-3-phospho-glyceroyl phosphate + NADH + H(+). It functions in the pathway carbohydrate degradation; glycolysis; pyruvate from D-glyceraldehyde 3-phosphate: step 1/5. This chain is Glyceraldehyde-3-phosphate dehydrogenase (GPD), found in Wickerhamomyces ciferrii (strain ATCC 14091 / BCRC 22168 / CBS 111 / JCM 3599 / NBRC 0793 / NRRL Y-1031 F-60-10) (Yeast).